Reading from the N-terminus, the 675-residue chain is Zinc finger CCCH domain-containing protein 65 (675 aa).

Residues 294 to 320 (TFSNEAKMDPGTSIKKRSAPSKDAKAR) are disordered. The segment covering 307–320 (IKKRSAPSKDAKAR) has biased composition (basic residues). Residues 314 to 342 (SKDAKARKRAKARIKRAQERIALGVKKLK) are a coiled coil. 3 consecutive C3H1-type zinc fingers follow at residues 350–377 (PKPI…HDTI), 384–406 (PCCY…HDLS), and 409–432 (PCNN…HKGT). Disordered stretches follow at residues 487–572 (LKPS…LPLG) and 586–612 (EQKT…SHIQ). The span at 490–504 (SSHSNQRNSSDASSS) shows a compositional bias: low complexity. Residues 543-567 (KASSASKPNTDNSDSQTLKQSQQGS) are compositionally biased toward polar residues. Positions 586 to 595 (EQKTLNREPQ) are enriched in basic and acidic residues. The segment covering 597–612 (PASSKNLKTTPSSHIQ) has biased composition (polar residues).

Its function is as follows. Possesses RNA-binding and ribonuclease activities in vitro. The sequence is that of Zinc finger CCCH domain-containing protein 65 (EMB1789) from Arabidopsis thaliana (Mouse-ear cress).